Consider the following 1576-residue polypeptide: DNA-directed RNA polymerase subunit beta' (1576 aa).

Zn(2+) contacts are provided by Cys-64, Cys-66, Cys-79, and Cys-82. Residues Asp-590, Asp-592, and Asp-594 each contribute to the Mg(2+) site. Residues Cys-928, Cys-1002, Cys-1009, and Cys-1012 each coordinate Zn(2+).

The protein belongs to the RNA polymerase beta' chain family. As to quaternary structure, the RNAP catalytic core consists of 2 alpha, 1 beta, 1 beta' and 1 omega subunit. When a sigma factor is associated with the core the holoenzyme is formed, which can initiate transcription. It depends on Mg(2+) as a cofactor. Zn(2+) is required as a cofactor.

It carries out the reaction RNA(n) + a ribonucleoside 5'-triphosphate = RNA(n+1) + diphosphate. Functionally, DNA-dependent RNA polymerase catalyzes the transcription of DNA into RNA using the four ribonucleoside triphosphates as substrates. This is DNA-directed RNA polymerase subunit beta' from Aquifex pyrophilus.